A 365-amino-acid polypeptide reads, in one-letter code: Isopentenyl-diphosphate delta-isomerase (365 aa).

8-9 serves as a coordination point for substrate; that stretch reads RK. FMN contacts are provided by residues 67-69, serine 97, and asparagine 126; that span reads SIT. 97–99 contacts substrate; it reads SQR. A substrate-binding site is contributed by glutamine 160. Glutamate 161 lines the Mg(2+) pocket. Residues lysine 192, threonine 222, 272-274, and 293-294 contribute to the FMN site; these read GIR and AL.

Belongs to the IPP isomerase type 2 family. Homooctamer. Dimer of tetramers. The cofactor is FMN. Requires NADPH as cofactor. Mg(2+) is required as a cofactor.

The protein localises to the cytoplasm. The enzyme catalyses isopentenyl diphosphate = dimethylallyl diphosphate. Its function is as follows. Involved in the biosynthesis of isoprenoids. Catalyzes the 1,3-allylic rearrangement of the homoallylic substrate isopentenyl (IPP) to its allylic isomer, dimethylallyl diphosphate (DMAPP). This chain is Isopentenyl-diphosphate delta-isomerase, found in Methanosarcina barkeri (strain Fusaro / DSM 804).